The sequence spans 133 residues: Acyl-CoA thioester hydrolase YciA (133 aa).

The 116-residue stretch at 8 to 123 (PQGELVLRTL…LFIYVAVDPD (116 aa)) folds into the HotDog ACOT-type domain.

Belongs to the acyl coenzyme A hydrolase family.

Functionally, catalyzes the hydrolysis of the thioester bond in palmitoyl-CoA and malonyl-CoA. The polypeptide is Acyl-CoA thioester hydrolase YciA (yciA) (Salmonella typhi).